The chain runs to 514 residues: Zinc finger CCCH-type with G patch domain-containing protein (514 aa).

Residues 96–129 (GEEPQPPGAGDGASTGSKDSEEEEEEEDGSSGMK) form a disordered region. Over residues 115–124 (SEEEEEEEDG) the composition is skewed to acidic residues. The C3H1-type zinc finger occupies 171–197 (KAMKPCPFFLDGKCRFDDSCRFSHGQV). Disordered stretches follow at residues 262 to 288 (IPPL…AAED), 363 to 422 (QQRK…AAER), and 494 to 514 (EEHS…MTEF). Acidic residues predominate over residues 272–287 (SSDDDDDDEEEDDAAE). The G-patch domain maps to 315–373 (TRGIGSKLLARMGYEIGKGLGRNAEGRVEPIQAVLLPKGKSLDQCIEMQQRKKAGGKRE). Over residues 365–383 (RKKAGGKREHKAGKRRPRA) the composition is skewed to basic residues.

Its subcellular location is the nucleus. Transcription repressor that specifically binds the 5'-GGAG[GA]A[GA]A-3' consensus sequence. Represses transcription by recruiting the chromatin multiprotein complex NuRD to target promoters. Negatively regulates expression of EGFR, a gene involved in cell proliferation, survival and migration. The chain is Zinc finger CCCH-type with G patch domain-containing protein (zgpat) from Xenopus tropicalis (Western clawed frog).